Reading from the N-terminus, the 187-residue chain is Crossover junction endodeoxyribonuclease RuvC (187 aa).

Catalysis depends on residues Asp-7, Glu-67, and Asp-140. Residues Asp-7, Glu-67, and Asp-140 each contribute to the Mg(2+) site.

Belongs to the RuvC family. Homodimer which binds Holliday junction (HJ) DNA. The HJ becomes 2-fold symmetrical on binding to RuvC with unstacked arms; it has a different conformation from HJ DNA in complex with RuvA. In the full resolvosome a probable DNA-RuvA(4)-RuvB(12)-RuvC(2) complex forms which resolves the HJ. It depends on Mg(2+) as a cofactor.

It is found in the cytoplasm. The enzyme catalyses Endonucleolytic cleavage at a junction such as a reciprocal single-stranded crossover between two homologous DNA duplexes (Holliday junction).. Functionally, the RuvA-RuvB-RuvC complex processes Holliday junction (HJ) DNA during genetic recombination and DNA repair. Endonuclease that resolves HJ intermediates. Cleaves cruciform DNA by making single-stranded nicks across the HJ at symmetrical positions within the homologous arms, yielding a 5'-phosphate and a 3'-hydroxyl group; requires a central core of homology in the junction. The consensus cleavage sequence is 5'-(A/T)TT(C/G)-3'. Cleavage occurs on the 3'-side of the TT dinucleotide at the point of strand exchange. HJ branch migration catalyzed by RuvA-RuvB allows RuvC to scan DNA until it finds its consensus sequence, where it cleaves and resolves the cruciform DNA. The protein is Crossover junction endodeoxyribonuclease RuvC of Prosthecochloris aestuarii (strain DSM 271 / SK 413).